The following is a 141-amino-acid chain: ATP synthase epsilon chain (141 aa).

It belongs to the ATPase epsilon chain family. In terms of assembly, F-type ATPases have 2 components, CF(1) - the catalytic core - and CF(0) - the membrane proton channel. CF(1) has five subunits: alpha(3), beta(3), gamma(1), delta(1), epsilon(1). CF(0) has three main subunits: a, b and c.

It localises to the cell inner membrane. In terms of biological role, produces ATP from ADP in the presence of a proton gradient across the membrane. The chain is ATP synthase epsilon chain from Bordetella avium (strain 197N).